Here is a 664-residue protein sequence, read N- to C-terminus: Zinc finger protein 710 (664 aa).

Glycyl lysine isopeptide (Lys-Gly) (interchain with G-Cter in SUMO2) cross-links involve residues Lys-110 and Lys-113. The disordered stretch occupies residues 121–141; sequence VYEVSVPGDDKDAGPAEAPAE. C2H2-type zinc fingers lie at residues 295-317, 323-345, and 351-373; these read WQCR…ILGH, HSCP…LLTH, and HKCQ…MLLH. Lys-377 is covalently cross-linked (Glycyl lysine isopeptide (Lys-Gly) (interchain with G-Cter in SUMO2)). C2H2-type zinc fingers lie at residues 379–401, 407–429, 435–457, 463–485, 491–513, 519–541, 547–569, and 575–598; these read YSCH…EVKH, HVCV…LASH, YQCL…MLKH, FVCT…SLTH, FKCE…MLIH, YQCH…MIVH, FKCK…MHLH, and FKCP…KVKH.

It belongs to the krueppel C2H2-type zinc-finger protein family.

Its subcellular location is the nucleus. In terms of biological role, may be involved in transcriptional regulation. The polypeptide is Zinc finger protein 710 (ZNF710) (Homo sapiens (Human)).